The chain runs to 319 residues: Methionyl-tRNA formyltransferase (319 aa).

113 to 116 (SLLP) lines the (6S)-5,6,7,8-tetrahydrofolate pocket.

It belongs to the Fmt family.

It carries out the reaction L-methionyl-tRNA(fMet) + (6R)-10-formyltetrahydrofolate = N-formyl-L-methionyl-tRNA(fMet) + (6S)-5,6,7,8-tetrahydrofolate + H(+). In terms of biological role, attaches a formyl group to the free amino group of methionyl-tRNA(fMet). The formyl group appears to play a dual role in the initiator identity of N-formylmethionyl-tRNA by promoting its recognition by IF2 and preventing the misappropriation of this tRNA by the elongation apparatus. The polypeptide is Methionyl-tRNA formyltransferase (Pseudomonas fluorescens (strain Pf0-1)).